The primary structure comprises 194 residues: Endoribonuclease YbeY (194 aa).

Zn(2+)-binding residues include His-151, His-155, and His-161.

The protein belongs to the endoribonuclease YbeY family. Zn(2+) is required as a cofactor.

It is found in the cytoplasm. Functionally, single strand-specific metallo-endoribonuclease involved in late-stage 70S ribosome quality control and in maturation of the 3' terminus of the 16S rRNA. This Gloeobacter violaceus (strain ATCC 29082 / PCC 7421) protein is Endoribonuclease YbeY.